Consider the following 362-residue polypeptide: Phosphoserine aminotransferase (362 aa).

L-glutamate is bound by residues Ser-9 and Arg-42. Pyridoxal 5'-phosphate contacts are provided by residues 76–77, Trp-102, Thr-153, Asp-174, and Gln-197; that span reads GR. At Lys-198 the chain carries N6-(pyridoxal phosphate)lysine. Residue 239-240 participates in pyridoxal 5'-phosphate binding; sequence NT.

This sequence belongs to the class-V pyridoxal-phosphate-dependent aminotransferase family. SerC subfamily. In terms of assembly, homodimer. It depends on pyridoxal 5'-phosphate as a cofactor.

The protein localises to the cytoplasm. It catalyses the reaction O-phospho-L-serine + 2-oxoglutarate = 3-phosphooxypyruvate + L-glutamate. It carries out the reaction 4-(phosphooxy)-L-threonine + 2-oxoglutarate = (R)-3-hydroxy-2-oxo-4-phosphooxybutanoate + L-glutamate. It functions in the pathway amino-acid biosynthesis; L-serine biosynthesis; L-serine from 3-phospho-D-glycerate: step 2/3. Its pathway is cofactor biosynthesis; pyridoxine 5'-phosphate biosynthesis; pyridoxine 5'-phosphate from D-erythrose 4-phosphate: step 3/5. Catalyzes the reversible conversion of 3-phosphohydroxypyruvate to phosphoserine and of 3-hydroxy-2-oxo-4-phosphonooxybutanoate to phosphohydroxythreonine. This is Phosphoserine aminotransferase from Salmonella arizonae (strain ATCC BAA-731 / CDC346-86 / RSK2980).